The primary structure comprises 223 residues: Cutinase (223 aa).

The first 19 residues, 1 to 19 (MKFFAFSMLIGEASPIVLA), serve as a signal peptide directing secretion. A disulfide bridge connects residues C46 and C124. S135 serves as the catalytic Nucleophile. C185 and C192 form a disulfide bridge. D189 is an active-site residue. H202 (proton donor/acceptor) is an active-site residue.

This sequence belongs to the cutinase family. The 2 disulfide bonds play a critical role in holding the catalytic residues in juxta-position; reduction of the disulfide bridges results in the complete inactivation of the enzyme.

Its subcellular location is the secreted. It carries out the reaction cutin + H2O = cutin monomers.. Functionally, catalyzes the hydrolysis of complex carboxylic polyesters found in the cell wall of plants. Degrades cutin, a macromolecule that forms the structure of the plant cuticle. Allows pathogenic fungi to penetrate through the cuticular barrier into the host plant during the initial stage of fungal infection. This is Cutinase (CUT) from Didymella rabiei (Chickpea ascochyta blight fungus).